A 131-amino-acid polypeptide reads, in one-letter code: Profilin (131 aa).

This sequence belongs to the profilin family. In terms of assembly, occurs in many kinds of cells as a complex with monomeric actin in a 1:1 ratio.

The protein resides in the cytoplasm. The protein localises to the cytoskeleton. Binds to actin and affects the structure of the cytoskeleton. At high concentrations, profilin prevents the polymerization of actin, whereas it enhances it at low concentrations. By binding to PIP2, it inhibits the formation of IP3 and DG. This chain is Profilin, found in Cucumis melo (Muskmelon).